The following is a 305-amino-acid chain: UPF0282 protein Tneu_0934 (305 aa).

This sequence belongs to the UPF0282 family.

The chain is UPF0282 protein Tneu_0934 from Pyrobaculum neutrophilum (strain DSM 2338 / JCM 9278 / NBRC 100436 / V24Sta) (Thermoproteus neutrophilus).